A 383-amino-acid polypeptide reads, in one-letter code: UDP-N-acetylglucosamine--N-acetylmuramyl-(pentapeptide) pyrophosphoryl-undecaprenol N-acetylglucosamine transferase (383 aa).

UDP-N-acetyl-alpha-D-glucosamine contacts are provided by residues 10-12, asparagine 124, arginine 165, serine 190, isoleucine 245, and glutamine 290; that span reads TGG. A disordered region spans residues 363-383; the sequence is SPFGQAREPGQKPARPPDPAS.

The protein belongs to the glycosyltransferase 28 family. MurG subfamily.

The protein resides in the cell inner membrane. The catalysed reaction is di-trans,octa-cis-undecaprenyl diphospho-N-acetyl-alpha-D-muramoyl-L-alanyl-D-glutamyl-meso-2,6-diaminopimeloyl-D-alanyl-D-alanine + UDP-N-acetyl-alpha-D-glucosamine = di-trans,octa-cis-undecaprenyl diphospho-[N-acetyl-alpha-D-glucosaminyl-(1-&gt;4)]-N-acetyl-alpha-D-muramoyl-L-alanyl-D-glutamyl-meso-2,6-diaminopimeloyl-D-alanyl-D-alanine + UDP + H(+). It functions in the pathway cell wall biogenesis; peptidoglycan biosynthesis. In terms of biological role, cell wall formation. Catalyzes the transfer of a GlcNAc subunit on undecaprenyl-pyrophosphoryl-MurNAc-pentapeptide (lipid intermediate I) to form undecaprenyl-pyrophosphoryl-MurNAc-(pentapeptide)GlcNAc (lipid intermediate II). This is UDP-N-acetylglucosamine--N-acetylmuramyl-(pentapeptide) pyrophosphoryl-undecaprenol N-acetylglucosamine transferase from Anaeromyxobacter dehalogenans (strain 2CP-1 / ATCC BAA-258).